We begin with the raw amino-acid sequence, 240 residues long: Sugar fermentation stimulation protein homolog (240 aa).

It belongs to the SfsA family.

The chain is Sugar fermentation stimulation protein homolog from Pasteurella multocida (strain Pm70).